Consider the following 227-residue polypeptide: SPbeta prophage-derived uncharacterized membrane protein YomJ (227 aa).

Transmembrane regions (helical) follow at residues 16 to 36 and 131 to 151; these read LFFL…IVGL and GIVA…GLSA.

It localises to the cell membrane. In Bacillus subtilis (strain 168), this protein is SPbeta prophage-derived uncharacterized membrane protein YomJ (yomJ).